Consider the following 1811-residue polypeptide: ADP-ribosylation factor guanine nucleotide-exchange factor sec71 (1811 aa).

Disordered stretches follow at residues 1-108 and 316-336; these read MTDL…TSEA and INMN…PIPS. 3 stretches are compositionally biased toward basic and acidic residues: residues 33-49, 57-73, and 80-91; these read STIK…HDSI, KSIE…KDIE, and PPEDDLDSRSIE. The residue at position 40 (S40) is a Phosphoserine. Polar residues-rich tracts occupy residues 92-108 and 316-326; these read SEQT…TSEA and INMNKSSSNGT. A Phosphothreonine modification is found at T326. A phosphoserine mark is found at S332 and S353. Residues 533–537 carry the HUS box motif; sequence NYDCI. A compositionally biased stretch (basic and acidic residues) spans 643–663; it reads TAKDDETESTSKGEEPQKSKS. Residues 643–688 are disordered; the sequence is TAKDDETESTSKGEEPQKSKSEPPSAGINSTSMDNLESSGQALATD. Residues 669–688 are compositionally biased toward polar residues; sequence GINSTSMDNLESSGQALATD. The region spanning 692–880 is the SEC7 domain; the sequence is QFENLKHRKK…TEVYEEIQKN (189 aa). Residue S741 is modified to Phosphoserine. T742 carries the post-translational modification Phosphothreonine. D812 contributes to the Mg(2+) binding site. Residues 889–1103 are HDS1 domain; it reads DPTSNFPEIP…TTKPLRKSLD (215 aa).

It localises to the cytoplasm. The protein resides in the golgi apparatus. It is found in the trans-Golgi network. The protein localises to the cytoplasmic vesicle. Its subcellular location is the COPI-coated vesicle membrane. It localises to the COPII-coated vesicle membrane. Functionally, guanine exchange factor that acts as an activator of arf1 at the trans-Golgi net-work and is thus involved in vesicular budding and traffic between compartments of the Golgi apparatus. Activation of Arf (ADP-ribosylation factor) GTPases is essential for vesicle formation via recruitment of cargo adapters and coat proteins necessary for Golgi trafficking. Involved in tunicamycin-induced ER stress response and subsequent apoptosis. The sequence is that of ADP-ribosylation factor guanine nucleotide-exchange factor sec71 from Schizosaccharomyces pombe (strain 972 / ATCC 24843) (Fission yeast).